A 182-amino-acid polypeptide reads, in one-letter code: Protein GrpE (182 aa).

Belongs to the GrpE family. In terms of assembly, homodimer.

It is found in the cytoplasm. In terms of biological role, participates actively in the response to hyperosmotic and heat shock by preventing the aggregation of stress-denatured proteins, in association with DnaK and GrpE. It is the nucleotide exchange factor for DnaK and may function as a thermosensor. Unfolded proteins bind initially to DnaJ; upon interaction with the DnaJ-bound protein, DnaK hydrolyzes its bound ATP, resulting in the formation of a stable complex. GrpE releases ADP from DnaK; ATP binding to DnaK triggers the release of the substrate protein, thus completing the reaction cycle. Several rounds of ATP-dependent interactions between DnaJ, DnaK and GrpE are required for fully efficient folding. The chain is Protein GrpE from Aquifex aeolicus (strain VF5).